Consider the following 142-residue polypeptide: Large ribosomal subunit protein mL43 (142 aa).

It belongs to the mitochondrion-specific ribosomal protein mL43 family. Component of the mitochondrial large ribosomal subunit. Mature mitochondrial ribosomes consist of a small (37S) and a large (54S) subunit. The 37S subunit contains at least 33 different proteins and 1 molecule of RNA (15S). The 54S subunit contains at least 45 different proteins and 1 molecule of RNA (21S).

Its subcellular location is the mitochondrion. This chain is Large ribosomal subunit protein mL43 (MRPL51), found in Eremothecium gossypii (strain ATCC 10895 / CBS 109.51 / FGSC 9923 / NRRL Y-1056) (Yeast).